We begin with the raw amino-acid sequence, 119 residues long: Aspartate 1-decarboxylase (119 aa).

The active-site Schiff-base intermediate with substrate; via pyruvic acid is Ser25. At Ser25 the chain carries Pyruvic acid (Ser). Residue Thr57 participates in substrate binding. The active-site Proton donor is the Tyr58. 73–75 (GAA) is a binding site for substrate.

This sequence belongs to the PanD family. As to quaternary structure, heterooctamer of four alpha and four beta subunits. The cofactor is pyruvate. Post-translationally, is synthesized initially as an inactive proenzyme, which is activated by self-cleavage at a specific serine bond to produce a beta-subunit with a hydroxyl group at its C-terminus and an alpha-subunit with a pyruvoyl group at its N-terminus.

The protein resides in the cytoplasm. It catalyses the reaction L-aspartate + H(+) = beta-alanine + CO2. It functions in the pathway cofactor biosynthesis; (R)-pantothenate biosynthesis; beta-alanine from L-aspartate: step 1/1. Catalyzes the pyruvoyl-dependent decarboxylation of aspartate to produce beta-alanine. The protein is Aspartate 1-decarboxylase of Ruthia magnifica subsp. Calyptogena magnifica.